A 272-amino-acid polypeptide reads, in one-letter code: Phosphoribosylformylglycinamidine synthase subunit PurQ (272 aa).

The Glutamine amidotransferase type-1 domain occupies 8-243 (VLVMSGYGIN…SEPEYQLKKE (236 aa)). Residue Cys98 is the Nucleophile of the active site. Catalysis depends on residues His225, Glu227, and Glu235.

Part of the FGAM synthase complex composed of 1 PurL, 1 PurQ and 2 PurS subunits.

Its subcellular location is the cytoplasm. The enzyme catalyses N(2)-formyl-N(1)-(5-phospho-beta-D-ribosyl)glycinamide + L-glutamine + ATP + H2O = 2-formamido-N(1)-(5-O-phospho-beta-D-ribosyl)acetamidine + L-glutamate + ADP + phosphate + H(+). It carries out the reaction L-glutamine + H2O = L-glutamate + NH4(+). It participates in purine metabolism; IMP biosynthesis via de novo pathway; 5-amino-1-(5-phospho-D-ribosyl)imidazole from N(2)-formyl-N(1)-(5-phospho-D-ribosyl)glycinamide: step 1/2. Its function is as follows. Part of the phosphoribosylformylglycinamidine synthase complex involved in the purines biosynthetic pathway. Catalyzes the ATP-dependent conversion of formylglycinamide ribonucleotide (FGAR) and glutamine to yield formylglycinamidine ribonucleotide (FGAM) and glutamate. The FGAM synthase complex is composed of three subunits. PurQ produces an ammonia molecule by converting glutamine to glutamate. PurL transfers the ammonia molecule to FGAR to form FGAM in an ATP-dependent manner. PurS interacts with PurQ and PurL and is thought to assist in the transfer of the ammonia molecule from PurQ to PurL. The chain is Phosphoribosylformylglycinamidine synthase subunit PurQ from Methanococcus maripaludis (strain C7 / ATCC BAA-1331).